A 95-amino-acid chain; its full sequence is Co-chaperonin GroES (95 aa).

This sequence belongs to the GroES chaperonin family. In terms of assembly, heptamer of 7 subunits arranged in a ring. Interacts with the chaperonin GroEL.

The protein localises to the cytoplasm. Its function is as follows. Together with the chaperonin GroEL, plays an essential role in assisting protein folding. The GroEL-GroES system forms a nano-cage that allows encapsulation of the non-native substrate proteins and provides a physical environment optimized to promote and accelerate protein folding. GroES binds to the apical surface of the GroEL ring, thereby capping the opening of the GroEL channel. The sequence is that of Co-chaperonin GroES from Geobacter sulfurreducens (strain ATCC 51573 / DSM 12127 / PCA).